An 813-amino-acid chain; its full sequence is Phosphoribosylformylglycinamidine synthase subunit PurL (813 aa).

Residue histidine 56 is part of the active site. ATP-binding residues include tyrosine 59 and lysine 103. Mg(2+) is bound at residue glutamate 105. Residues 106–109 (SHNH) and arginine 128 contribute to the substrate site. Histidine 107 serves as the catalytic Proton acceptor. Aspartate 129 is a binding site for Mg(2+). A substrate-binding site is contributed by glutamine 253. Position 281 (aspartate 281) interacts with Mg(2+). Residue 325 to 327 (ESQ) coordinates substrate. Positions 511 and 548 each coordinate ATP. A Mg(2+)-binding site is contributed by asparagine 549. Residue serine 551 coordinates substrate.

Belongs to the FGAMS family. In terms of assembly, monomer. Part of the FGAM synthase complex composed of 1 PurL, 1 PurQ and 2 PurS subunits.

It is found in the cytoplasm. It carries out the reaction N(2)-formyl-N(1)-(5-phospho-beta-D-ribosyl)glycinamide + L-glutamine + ATP + H2O = 2-formamido-N(1)-(5-O-phospho-beta-D-ribosyl)acetamidine + L-glutamate + ADP + phosphate + H(+). It functions in the pathway purine metabolism; IMP biosynthesis via de novo pathway; 5-amino-1-(5-phospho-D-ribosyl)imidazole from N(2)-formyl-N(1)-(5-phospho-D-ribosyl)glycinamide: step 1/2. Functionally, part of the phosphoribosylformylglycinamidine synthase complex involved in the purines biosynthetic pathway. Catalyzes the ATP-dependent conversion of formylglycinamide ribonucleotide (FGAR) and glutamine to yield formylglycinamidine ribonucleotide (FGAM) and glutamate. The FGAM synthase complex is composed of three subunits. PurQ produces an ammonia molecule by converting glutamine to glutamate. PurL transfers the ammonia molecule to FGAR to form FGAM in an ATP-dependent manner. PurS interacts with PurQ and PurL and is thought to assist in the transfer of the ammonia molecule from PurQ to PurL. This chain is Phosphoribosylformylglycinamidine synthase subunit PurL, found in Corynebacterium jeikeium (strain K411).